The primary structure comprises 557 residues: High-affinity hexose transporter ght4 (557 aa).

Topologically, residues 1–9 (MGRTLTSVL) are cytoplasmic. A helical membrane pass occupies residues 10–30 (VVFISMAGWLGGADTGSISGI). At 31–58 (LGMRDFQSRFADRYNPITNSYSYSAWRQ) the chain is on the extracellular side. Residues 59-79 (ALLTGTVNAGCLFGAMLSSPF) traverse the membrane as a helical segment. Over 80-87 (TEAIGKKY) the chain is Cytoplasmic. A helical transmembrane segment spans residues 88–108 (SIAFFSGCYIIGQILLVTAVP). At 109–112 (SWVQ) the chain is on the extracellular side. Residues 113 to 133 (IMVGKLFTGLTIGALSVLSPG) traverse the membrane as a helical segment. At 134 to 144 (YQSEVAPPQIR) the chain is on the cytoplasmic side. The chain crosses the membrane as a helical span at residues 145–165 (GAVVSTYQLFQTCGTLIAACI). Over 166–179 (NMGTHKLRKTASWR) the chain is Extracellular. The helical transmembrane segment at 180 to 200 (TSFGINILWGIFLMVGVLFLP) threads the bilayer. Residues 201-266 (ESPRYLIYKG…VFGKEVRYRT (66 aa)) are Cytoplasmic-facing. The chain crosses the membrane as a helical span at residues 267–285 (VLGFLTMLLRELIGNNYYF). Over 286 to 301 (YYATQVFKGTGMTDIF) the chain is Extracellular. The chain crosses the membrane as a helical span at residues 302–322 (LPAVILGAINFGTTFGALYTI). At 323 to 328 (DNLGRR) the chain is on the cytoplasmic side. Residues 329 to 349 (NPLIFGAAFQSICFFIYAAVG) traverse the membrane as a helical segment. The Extracellular segment spans residues 350–363 (DRKLIYKNGTSDHR). An N-linked (GlcNAc...) asparagine glycan is attached at Asn-357. A helical membrane pass occupies residues 364–384 (AGAVMIVFSCLFLFSYCCSWG). Topologically, residues 385-404 (PMGWVIVGETFPIRYRSKCA) are cytoplasmic. The chain crosses the membrane as a helical span at residues 405–425 (AVATSGNWLGNFMVSFFTPFI). The Extracellular segment spans residues 426-432 (SNSIGFK). The helical transmembrane segment at 433–453 (LGYIYACINMTSAFQIFLMAK) threads the bilayer. Residues 454-557 (ETKGLTLEEV…VSEESHPTWV (104 aa)) are Cytoplasmic-facing. Basic and acidic residues predominate over residues 492-514 (KEEEKREREKSKGYRGQEERFIE). The interval 492–557 (KEEEKREREK…VSEESHPTWV (66 aa)) is disordered. Positions 524–536 (SSASSESFASAGA) are enriched in low complexity. Residues 547–557 (NVSEESHPTWV) show a composition bias toward basic and acidic residues.

Belongs to the major facilitator superfamily. Sugar transporter (TC 2.A.1.1) family.

It localises to the membrane. This is High-affinity hexose transporter ght4 (ght4) from Schizosaccharomyces pombe (strain 972 / ATCC 24843) (Fission yeast).